Reading from the N-terminus, the 145-residue chain is MTLTNYVQEVSLADFGKPFHHKAYWNKRLKTTGGRFFPKDGHLDFNPRMLEEHGELIFRKIVRHELCHYHLYFEGRGYHHKDRDFKDLLAQVNGLRYVPTSSKSKTNHHYSCQTCGQVYQRKRRINLAKYVCGNCHGKLMEKNQS.

Residues 4–140 (TNYVQEVSLA…VCGNCHGKLM (137 aa)) enclose the SprT-like domain. His-64 serves as a coordination point for Zn(2+). Residue Glu-65 is part of the active site. His-68 provides a ligand contact to Zn(2+).

The protein belongs to the SprT family. It depends on Zn(2+) as a cofactor.

Its subcellular location is the cytoplasm. The protein is Protein SprT-like of Streptococcus pyogenes serotype M3 (strain SSI-1).